Consider the following 364-residue polypeptide: NADH-quinone oxidoreductase subunit H (364 aa).

The next 8 membrane-spanning stretches (helical) occupy residues 21–41 (AGQILAVMIWILLSLAFLLLA), 88–108 (VFLLAPLISFTLAFAAWAVIP), 120–140 (VGILYLFAISSLGVYGIIMGG), 159–179 (MVSYEVSIGFIIITVILLAGS), 208–228 (LPLLLVMVPMAVIFFISGLAE), 267–287 (IVLICAMTTILFFGGWSAPFP), 301–321 (FYYFMWFFLKVIFFFFLVSMA), and 340–360 (VFLPFSLVCVALIAAWRVFGP).

The protein belongs to the complex I subunit 1 family. As to quaternary structure, NDH-1 is composed of 14 different subunits. Subunits NuoA, H, J, K, L, M, N constitute the membrane sector of the complex.

The protein localises to the cell inner membrane. It carries out the reaction a quinone + NADH + 5 H(+)(in) = a quinol + NAD(+) + 4 H(+)(out). Functionally, NDH-1 shuttles electrons from NADH, via FMN and iron-sulfur (Fe-S) centers, to quinones in the respiratory chain. The immediate electron acceptor for the enzyme in this species is believed to be ubiquinone. Couples the redox reaction to proton translocation (for every two electrons transferred, four hydrogen ions are translocated across the cytoplasmic membrane), and thus conserves the redox energy in a proton gradient. This subunit may bind ubiquinone. This chain is NADH-quinone oxidoreductase subunit H, found in Phenylobacterium zucineum (strain HLK1).